Reading from the N-terminus, the 199-residue chain is ATP-dependent Clp protease proteolytic subunit (199 aa).

Serine 102 functions as the Nucleophile in the catalytic mechanism. Histidine 127 is a catalytic residue.

This sequence belongs to the peptidase S14 family. Fourteen ClpP subunits assemble into 2 heptameric rings which stack back to back to give a disk-like structure with a central cavity, resembling the structure of eukaryotic proteasomes.

It is found in the cytoplasm. It catalyses the reaction Hydrolysis of proteins to small peptides in the presence of ATP and magnesium. alpha-casein is the usual test substrate. In the absence of ATP, only oligopeptides shorter than five residues are hydrolyzed (such as succinyl-Leu-Tyr-|-NHMec, and Leu-Tyr-Leu-|-Tyr-Trp, in which cleavage of the -Tyr-|-Leu- and -Tyr-|-Trp bonds also occurs).. Its function is as follows. Cleaves peptides in various proteins in a process that requires ATP hydrolysis. Has a chymotrypsin-like activity. Plays a major role in the degradation of misfolded proteins. This chain is ATP-dependent Clp protease proteolytic subunit, found in Pseudothermotoga lettingae (strain ATCC BAA-301 / DSM 14385 / NBRC 107922 / TMO) (Thermotoga lettingae).